Here is a 555-residue protein sequence, read N- to C-terminus: Glutamine--tRNA ligase (555 aa).

The 'HIGH' region motif lies at proline 34–histidine 44. Residues glutamate 35–asparagine 37 and histidine 41–serine 47 contribute to the ATP site. Positions 67 and 212 each coordinate L-glutamine. ATP is bound by residues threonine 231, arginine 261–leucine 262, and methionine 269–lysine 271. A 'KMSKS' region motif is present at residues valine 268–arginine 272. The tract at residues threonine 317–glutamate 324 is interaction with tRNA.

The protein belongs to the class-I aminoacyl-tRNA synthetase family. As to quaternary structure, monomer.

Its subcellular location is the cytoplasm. The enzyme catalyses tRNA(Gln) + L-glutamine + ATP = L-glutaminyl-tRNA(Gln) + AMP + diphosphate. The protein is Glutamine--tRNA ligase of Citrobacter koseri (strain ATCC BAA-895 / CDC 4225-83 / SGSC4696).